The chain runs to 134 residues: MTDKYKERRFDIYGYEKIDKEVLESIEYEYPEKNTIVEYITDEFSSVCPWTGLPDNAKLTIRYIPHKKLVELKSLKYYLTSYRNVGILQEHAINRILDDLVEFLQPKFMEIIGEFQERGGIATRIIARYEKEEY.

The active-site Thioimide intermediate is the C48. D55 (proton donor) is an active-site residue. Substrate-binding positions include 70–72 (VEL) and 89–90 (QE).

It belongs to the GTP cyclohydrolase I family. QueF type 1 subfamily.

The protein resides in the cytoplasm. The catalysed reaction is 7-aminomethyl-7-carbaguanine + 2 NADP(+) = 7-cyano-7-deazaguanine + 2 NADPH + 3 H(+). It functions in the pathway tRNA modification; tRNA-queuosine biosynthesis. Functionally, catalyzes the NADPH-dependent reduction of 7-cyano-7-deazaguanine (preQ0) to 7-aminomethyl-7-deazaguanine (preQ1). The polypeptide is NADPH-dependent 7-cyano-7-deazaguanine reductase (Caldanaerobacter subterraneus subsp. tengcongensis (strain DSM 15242 / JCM 11007 / NBRC 100824 / MB4) (Thermoanaerobacter tengcongensis)).